The sequence spans 153 residues: Profilin (153 aa).

The protein belongs to the profilin family. In terms of assembly, occurs in many kinds of cells as a complex with monomeric actin in a 1:1 ratio.

It localises to the cytoplasm. It is found in the cytoskeleton. In terms of biological role, binds to actin and affects the structure of the cytoskeleton. At high concentrations, profilin prevents the polymerization of actin, whereas it enhances it at low concentrations. By binding to PIP2, it inhibits the formation of IP3 and DG. The protein is Profilin of Tetrahymena pyriformis.